The chain runs to 305 residues: GTPase Era (305 aa).

The Era-type G domain maps to 11–181 (RSGFVSFVGR…IKVMTDLLPE (171 aa)). Positions 19 to 26 (GRPNTGKS) are G1. 19-26 (GRPNTGKS) contributes to the GTP binding site. The tract at residues 45-49 (ETTRH) is G2. The G3 stretch occupies residues 66-69 (DTPG). Residues 66-70 (DTPGL) and 130-133 (TKAD) contribute to the GTP site. The interval 130–133 (TKAD) is G4. The tract at residues 160-162 (VSS) is G5. The KH type-2 domain maps to 212–291 (LKNELPHSVA…FLDLRIKVLK (80 aa)).

Belongs to the TRAFAC class TrmE-Era-EngA-EngB-Septin-like GTPase superfamily. Era GTPase family. As to quaternary structure, monomer.

Its subcellular location is the cytoplasm. It is found in the cell membrane. Its function is as follows. An essential GTPase that binds both GDP and GTP, with rapid nucleotide exchange. Plays a role in 16S rRNA processing and 30S ribosomal subunit biogenesis and possibly also in cell cycle regulation and energy metabolism. The chain is GTPase Era from Corynebacterium glutamicum (strain ATCC 13032 / DSM 20300 / JCM 1318 / BCRC 11384 / CCUG 27702 / LMG 3730 / NBRC 12168 / NCIMB 10025 / NRRL B-2784 / 534).